The following is a 332-amino-acid chain: 30 kDa heat shock protein (332 aa).

Over 1–34 (MNDTLSSFLNRNEALGLNPPHGLDMHITKRGSDW) the chain is Extracellular. The helical transmembrane segment at 35 to 55 (LWAVFAVFGFILLCYVVMFFI) threads the bilayer. At 56–65 (AENKGSRLTR) the chain is on the cytoplasmic side. A helical transmembrane segment spans residues 66–86 (YALAPAFLITFFEFFAFFTYA). Residues 87-121 (SDLGWTGVQAEFNHVKVSKSITGEVPGIRQIFYSK) lie on the Extracellular side of the membrane. A helical transmembrane segment spans residues 122 to 142 (YIAWFLSWPCLLFLIELAAST). At 143–157 (TGENDDISALDMVHS) the chain is on the cytoplasmic side. A helical transmembrane segment spans residues 158-178 (LLIQIVGTLFWVVSLLVGSLI). The Extracellular portion of the chain corresponds to 179–181 (KST). A helical transmembrane segment spans residues 182–202 (YKWGYYTIGAVAMLVTQGVIC). Topologically, residues 203–215 (QRQFFNLKTRGFN) are cytoplasmic. Residues 216 to 236 (ALMLCTCMVIVWLYFICWGLS) form a helical membrane-spanning segment. The Extracellular segment spans residues 237–248 (DGGNRIQPDGEA). The helical transmembrane segment at 249–269 (IFYGVLDLCVFAIYPCYLLIA) threads the bilayer. Residues 270-332 (VSRDGKLPRL…EAEQAVEDTA (63 aa)) are Cytoplasmic-facing. Residues 290 to 332 (ATDDVEDAAPETKEAVPESPRASGETAIHEPEPEAEQAVEDTA) form a disordered region. Ser308 carries the phosphoserine modification. Residues 322-332 (PEAEQAVEDTA) are compositionally biased toward acidic residues. Thr331 is modified (phosphothreonine).

Belongs to the archaeal/bacterial/fungal opsin family.

It localises to the membrane. Functionally, probably cooperates with other heat shock proteins in the translocation of polypeptides through membranes. It may counteract the altering effect of heat shock on the plasma membrane. The sequence is that of 30 kDa heat shock protein (HSP30) from Saccharomyces cerevisiae (strain ATCC 204508 / S288c) (Baker's yeast).